We begin with the raw amino-acid sequence, 259 residues long: 5'-nucleotidase SurE (259 aa).

Positions 13, 14, 44, and 101 each coordinate a divalent metal cation.

Belongs to the SurE nucleotidase family. A divalent metal cation is required as a cofactor.

Its subcellular location is the cytoplasm. It catalyses the reaction a ribonucleoside 5'-phosphate + H2O = a ribonucleoside + phosphate. Functionally, nucleotidase that shows phosphatase activity on nucleoside 5'-monophosphates. The polypeptide is 5'-nucleotidase SurE (Flavobacterium johnsoniae (strain ATCC 17061 / DSM 2064 / JCM 8514 / BCRC 14874 / CCUG 350202 / NBRC 14942 / NCIMB 11054 / UW101) (Cytophaga johnsonae)).